The primary structure comprises 485 residues: L-ornithine N(5)-oxygenase (485 aa).

FAD is bound by residues 49 to 57 (ERQQQFVWH) and glutamine 68. Lysine 73 provides a ligand contact to L-ornithine. Residue valine 134 participates in FAD binding. Arginine 243 is a binding site for NADP(+). L-ornithine is bound by residues 257–260 (NEIF) and asparagine 287. 287 to 289 (NYS) contributes to the NADP(+) binding site. Residue 425–427 (TLL) participates in FAD binding. Position 428 (serine 428) interacts with L-ornithine.

The protein belongs to the lysine N(6)-hydroxylase/L-ornithine N(5)-oxygenase family. Homotetramer. Requires FAD as cofactor.

It catalyses the reaction L-ornithine + NADH + O2 = N(5)-hydroxy-L-ornithine + NAD(+) + H2O. The enzyme catalyses L-ornithine + NADPH + O2 = N(5)-hydroxy-L-ornithine + NADP(+) + H2O. It participates in siderophore biosynthesis. Its function is as follows. L-ornithine N(5)-oxygenase; part of the gene cluster that mediates the biosynthesis of desferriferrichrome that chelates Fe(3+) to form ferrichrome. Fe(3+) is a key factor for induction of trap formation and the fungus uses the iron chelating desferriferrichrome to sequester Fe(3+) to inhibit trap formation and increase nematicidal activity. The biosynthesis of desferriferrichrome requires the action of the L-ornithine N(5)-oxygenase (LOO) Ao414 that hydroxylates L-ornithine at N(5), resulting in the formation of N(5)-hydroxyl-L-ornithine, which is subsequently N-acetylated to yield N(5)-acetyl-N(5)-hydroxy-L-ornithine (L-AHO). L-AHO harbors one hydroxamate moiety, which is the key core responsible for chelating iron. Then, L-AHO is further condensated with glycines to form desferriferrichrome through the NRPS protein Ao415. This chain is L-ornithine N(5)-oxygenase, found in Arthrobotrys oligospora (strain ATCC 24927 / CBS 115.81 / DSM 1491) (Nematode-trapping fungus).